A 796-amino-acid chain; its full sequence is Endonuclease MutS2 (796 aa).

339-346 is an ATP binding site; sequence GPNTGGKT. The disordered stretch occupies residues 620-644; sequence EKLGDTDSSLVSKAKKNRKQHKPSD. The Smr domain occupies 721-796; sequence LNIIGKRVDE…DHGVTIVEFK (76 aa).

It belongs to the DNA mismatch repair MutS family. MutS2 subfamily. In terms of assembly, homodimer. Binds to stalled ribosomes, contacting rRNA.

Its function is as follows. Endonuclease that is involved in the suppression of homologous recombination and thus may have a key role in the control of bacterial genetic diversity. In terms of biological role, acts as a ribosome collision sensor, splitting the ribosome into its 2 subunits. Detects stalled/collided 70S ribosomes which it binds and splits by an ATP-hydrolysis driven conformational change. Acts upstream of the ribosome quality control system (RQC), a ribosome-associated complex that mediates the extraction of incompletely synthesized nascent chains from stalled ribosomes and their subsequent degradation. Probably generates substrates for RQC. This chain is Endonuclease MutS2, found in Lachnoclostridium phytofermentans (strain ATCC 700394 / DSM 18823 / ISDg) (Clostridium phytofermentans).